We begin with the raw amino-acid sequence, 191 residues long: Somatotropin (191 aa).

Residue histidine 20 coordinates Zn(2+). Residues cysteine 53 and cysteine 164 are joined by a disulfide bond. Glutamate 173 lines the Zn(2+) pocket. A disulfide bond links cysteine 181 and cysteine 189.

Belongs to the somatotropin/prolactin family.

It localises to the secreted. Its function is as follows. Growth hormone plays an important role in growth control and is involved in the regulation of several anabolic processes. Implicated as an osmoregulatory substance important for seawater adaptation. The polypeptide is Somatotropin (GH) (Chelonia mydas (Green sea-turtle)).